A 334-amino-acid chain; its full sequence is Isocitrate/homoisocitrate dehydrogenase (334 aa).

70-72 (ATS) is a binding site for NADH. S72, R85, R88, R98, R118, Y125, K171, and N173 together coordinate (2R,3S)-homoisocitrate. N173 contributes to the NADH binding site. Mg(2+) is bound by residues D204, D228, and D232. Residues 261-265 (GSAPD) and N273 contribute to the NADH site.

The protein belongs to the isocitrate and isopropylmalate dehydrogenases family. Homotetramer. Dimer of dimers. The homotetramer can transiently dissociate into homodimers. It depends on Mg(2+) as a cofactor.

The enzyme catalyses (2R,3S)-homoisocitrate + NAD(+) = 2-oxoadipate + CO2 + NADH. It catalyses the reaction D-threo-isocitrate + NAD(+) = 2-oxoglutarate + CO2 + NADH. Its pathway is amino-acid biosynthesis; L-lysine biosynthesis via AAA pathway; L-alpha-aminoadipate from 2-oxoglutarate: step 4/5. Functionally, catalyzes the NAD(+)-dependent oxidative decarboxylation of homoisocitrate to 2-oxoadipate (alpha-ketoadipate), a reaction involved in lysine biosynthesis through the alpha-aminoadipate pathway. In addition, has high activity with isocitrate, but is inactive with 3-isopropylmalate. In Thermus thermophilus (strain ATCC BAA-163 / DSM 7039 / HB27), this protein is Isocitrate/homoisocitrate dehydrogenase (hicd).